A 338-amino-acid polypeptide reads, in one-letter code: MQIRDAIITVTNRTDLSQDDAAAVMEQMMNGEATPAQIAALLTALHFKGETDAEIAGMAQVMRAKSLAVPHDGGVVDTCGTGGDHSNTFNISTTAAFVAAGAGATVAKHGNRAMSSKCGSADVLEGLGVNIELDAEGVARCLRQAGIGFMFAPKFHPAMRYAGPVRREIGIRTIFNVLGPLTNPARAEYQVIGVANAGLAEKLANALSKMGIRRALVVHGSDGLDEISISASTLVFDVRAGATPQASTISPSDFGLSLAPREAIAGGSVEENVAMTKAILEGSDTGPRRDIVLLNAAAALVACERADSFGEALRQAQQAIDTGSANQRMQRMIEASNG.

Residues glycine 80, glycine 83–aspartate 84, threonine 88, asparagine 90–threonine 93, lysine 108–serine 116, and serine 120 contribute to the 5-phospho-alpha-D-ribose 1-diphosphate site. Glycine 80 provides a ligand contact to anthranilate. Serine 92 lines the Mg(2+) pocket. Asparagine 111 is a binding site for anthranilate. Residue arginine 166 coordinates anthranilate. Mg(2+) contacts are provided by aspartate 225 and glutamate 226.

This sequence belongs to the anthranilate phosphoribosyltransferase family. As to quaternary structure, homodimer. It depends on Mg(2+) as a cofactor.

It catalyses the reaction N-(5-phospho-beta-D-ribosyl)anthranilate + diphosphate = 5-phospho-alpha-D-ribose 1-diphosphate + anthranilate. It participates in amino-acid biosynthesis; L-tryptophan biosynthesis; L-tryptophan from chorismate: step 2/5. Functionally, catalyzes the transfer of the phosphoribosyl group of 5-phosphorylribose-1-pyrophosphate (PRPP) to anthranilate to yield N-(5'-phosphoribosyl)-anthranilate (PRA). The protein is Anthranilate phosphoribosyltransferase of Herpetosiphon aurantiacus (strain ATCC 23779 / DSM 785 / 114-95).